The following is a 401-amino-acid chain: MAAATVTVEEVRKAQRATGPATVLAIGTATPANCVHQADYPDYYFRITKSEHMTELKEKFKRMCDKSQIRKRYMHLTEEYLAENPNMCAYMAPSLDARQDIVVVEVPKLGKAAAHKAIKEWGQPKSKITHLVFCTTSGVDMPGADYQLTKMLGLRPSVNRLMMYQQGCFAGGTVLRVAKDLAENNRGARVLVVCSEITAVTFRGPSESHLDSMVGQALFGDGAAAVIVGADPDERVERPLFQLVSASQTILPDSEGAIDGHLREVGLTFHLLKDVPGLISKNIERSLEEAFKPLGITDYNSIFWVAHPGGPAILDQVEAKVGLEKERMRATRHVLSEYGNMSSACVLFILDEMRKRSAEDGQATTGEGFDWGVLFGFGPGLTVETVVLHSVPITTGAAITA.

Residue C168 is part of the active site.

Belongs to the thiolase-like superfamily. Chalcone/stilbene synthases family.

It catalyses the reaction (E)-4-coumaroyl-CoA + 3 malonyl-CoA + 3 H(+) = 2',4,4',6'-tetrahydroxychalcone + 3 CO2 + 4 CoA. Its pathway is secondary metabolite biosynthesis; flavonoid biosynthesis. In terms of biological role, the primary product of this enzyme is 4,2',4',6'-tetrahydroxychalcone (also termed naringenin-chalcone or chalcone) which can under specific conditions spontaneously isomerize into naringenin. The polypeptide is Chalcone synthase 5 (CHS5) (Sorghum bicolor (Sorghum)).